The following is a 245-amino-acid chain: Dehydrogenase/reductase SDR family member 6 (245 aa).

NAD(+) contacts are provided by residues 16 to 18, Asp-37, and Asp-58; that span reads QGI. Substrate is bound at residue Arg-144. The Proton acceptor role is filled by Tyr-147. Residues Lys-151 and 180–184 each bind NAD(+); that span reads VDTPS. Substrate is bound by residues Arg-188 and Arg-205.

Belongs to the short-chain dehydrogenases/reductases (SDR) family. Homotetramer.

The protein resides in the cytoplasm. It catalyses the reaction cis-4-hydroxy-L-proline + NAD(+) = 4-oxo-L-proline + NADH + H(+). It carries out the reaction (R)-3-hydroxybutanoate + NAD(+) = acetoacetate + NADH + H(+). It functions in the pathway amino-acid metabolism. The protein operates within siderophore biosynthesis. Its function is as follows. NAD(H)-dependent dehydrogenase/reductase with a preference for cyclic substrates. Catalyzes stereoselective conversion of 4-oxo-L-proline to cis-4-hydroxy-L-proline, likely a detoxification mechanism for ketoprolines. Mediates the formation of 2,5-dihydroxybenzoate (2,5-DHBA), a siderophore that chelates free cytoplasmic iron and associates with LCN2, thereby regulating iron transport and homeostasis while protecting cells against free radical-induced oxidative stress. The iron-siderophore complex is imported into mitochondria, providing an iron source for mitochondrial metabolic processes in particular heme synthesis. May act as a 3-hydroxybutyrate dehydrogenase. The polypeptide is Dehydrogenase/reductase SDR family member 6 (Rattus norvegicus (Rat)).